A 341-amino-acid chain; its full sequence is UDP-3-O-acylglucosamine N-acyltransferase (341 aa).

Catalysis depends on His-237, which acts as the Proton acceptor.

This sequence belongs to the transferase hexapeptide repeat family. LpxD subfamily. As to quaternary structure, homotrimer.

The enzyme catalyses a UDP-3-O-[(3R)-3-hydroxyacyl]-alpha-D-glucosamine + a (3R)-hydroxyacyl-[ACP] = a UDP-2-N,3-O-bis[(3R)-3-hydroxyacyl]-alpha-D-glucosamine + holo-[ACP] + H(+). The protein operates within bacterial outer membrane biogenesis; LPS lipid A biosynthesis. In terms of biological role, catalyzes the N-acylation of UDP-3-O-acylglucosamine using 3-hydroxyacyl-ACP as the acyl donor. Is involved in the biosynthesis of lipid A, a phosphorylated glycolipid that anchors the lipopolysaccharide to the outer membrane of the cell. This chain is UDP-3-O-acylglucosamine N-acyltransferase, found in Azoarcus sp. (strain BH72).